The sequence spans 28 residues: Cliotide T21 (28 aa).

Residues 1–28 (DLQCAETCVHSPCIGPCYCKHGLICYRN) constitute a cross-link (cyclopeptide (Asp-Asn)). Intrachain disulfides connect cysteine 4–cysteine 17, cysteine 8–cysteine 19, and cysteine 13–cysteine 25.

Post-translationally, contains 3 disulfide bonds. This is a cyclic peptide. As to expression, expressed in root nodules but not in seed.

In terms of biological role, probably participates in a plant defense mechanism. Not active against Gram-negative bacterium E.coli ATCC 700926 or Gram-positive bacterium S.aureus ATCC 12600 up to a concentration of 100 uM under low-salt conditions. The chain is Cliotide T21 from Clitoria ternatea (Butterfly pea).